Here is a 149-residue protein sequence, read N- to C-terminus: MADQLTEEQIAEFKEAFSLFDKDGNGNITTKELGTVMRSLGQNPTEGELQDMINEVDADGNGTIDFPEFLTMMARKMKDTDSEEEIREAFKVFDKDGNGFISAAELRHVMTNPGEKLTDEEVDEMIREADIDGDGQVNYEEFVKMMTSK.

Ala-2 is modified (N-acetylalanine). EF-hand domains are found at residues 8–43, 44–79, 81–116, and 117–149; these read EQIAEFKEAFSLFDKDGNGNITTKELGTVMRSLGQN, PTEGELQDMINEVDADGNGTIDFPEFLTMMARKMKD, DSEEEIREAFKVFDKDGNGFISAAELRHVMTNPGEK, and LTDEEVDEMIREADIDGDGQVNYEEFVKMMTSK. Ca(2+) contacts are provided by Asp-21, Asp-23, Asn-25, Asn-27, Glu-32, Asp-57, Asp-59, Asn-61, Thr-63, Glu-68, Asp-94, Asp-96, Asn-98, and Glu-105. N6,N6,N6-trimethyllysine is present on Lys-116. Ca(2+) is bound by residues Asp-130, Asp-132, Asp-134, Gln-136, and Glu-141.

It belongs to the calmodulin family.

In terms of biological role, calmodulin mediates the control of a large number of enzymes, ion channels and other proteins by Ca(2+). Among the enzymes to be stimulated by the calmodulin-Ca(2+) complex are a number of protein kinases and phosphatases. The polypeptide is Calmodulin-2 (CAM2) (Branchiostoma floridae (Florida lancelet)).